Consider the following 215-residue polypeptide: Large ribosomal subunit protein uL4 (215 aa).

Residues 43–101 (HQRQGTSKTKERGEVRGSGRKLYRQKGTGNARVGDAQSPIRRGGGRAHGARPRDYAHDL) are disordered. Residues 50 to 59 (KTKERGEVRG) show a composition bias toward basic and acidic residues.

It belongs to the universal ribosomal protein uL4 family. Part of the 50S ribosomal subunit.

Functionally, one of the primary rRNA binding proteins, this protein initially binds near the 5'-end of the 23S rRNA. It is important during the early stages of 50S assembly. It makes multiple contacts with different domains of the 23S rRNA in the assembled 50S subunit and ribosome. Forms part of the polypeptide exit tunnel. This Salinibacter ruber (strain DSM 13855 / M31) protein is Large ribosomal subunit protein uL4.